Reading from the N-terminus, the 153-residue chain is Large ribosomal subunit protein uL13 (153 aa).

This sequence belongs to the universal ribosomal protein uL13 family. Part of the 50S ribosomal subunit.

Functionally, this protein is one of the early assembly proteins of the 50S ribosomal subunit, although it is not seen to bind rRNA by itself. It is important during the early stages of 50S assembly. This is Large ribosomal subunit protein uL13 from Chelativorans sp. (strain BNC1).